Reading from the N-terminus, the 297-residue chain is MKAPSTSANLGAGFDIVAVAHDAYFAEAYTAVGSGCGVHVKFKGYDPGPENTVTRSFKKFFELTGICRGVEVEVENNIPIARGLGSSGAAAVAALAAFIREAGIKTDPRAVIEAAGYGETAAAGSPHFDNVAGAALGGAVVLTSLSPIDYVKFSPRLIFVVGVPEVPPMPNKTKVMREVLPKSVEFKTYVRQTARVASLIAGLALSDPRLVARGMEDEVVEAARAPYVPGYARVRKYAFEAGALGVSLSGAGPSVIALVNEKEAEAVRDAVLRAYAEEGLRAEVKIASITEGALASL.

79 to 89 provides a ligand contact to ATP; sequence PIARGLGSSGA.

It belongs to the GHMP kinase family. Homoserine kinase subfamily.

It is found in the cytoplasm. The catalysed reaction is L-homoserine + ATP = O-phospho-L-homoserine + ADP + H(+). It participates in amino-acid biosynthesis; L-threonine biosynthesis; L-threonine from L-aspartate: step 4/5. Functionally, catalyzes the ATP-dependent phosphorylation of L-homoserine to L-homoserine phosphate. This is Homoserine kinase from Pyrobaculum aerophilum (strain ATCC 51768 / DSM 7523 / JCM 9630 / CIP 104966 / NBRC 100827 / IM2).